We begin with the raw amino-acid sequence, 282 residues long: U1 small nuclear ribonucleoprotein A (282 aa).

RRM domains lie at 10–89 (NTIY…YSKT) and 208–282 (HILF…FAKK).

The protein belongs to the RRM U1 A/B'' family. U1 snRNP is composed of the 7 core Sm proteins snrpb, snrpd1, snrpd2, snrpd3, snrpe, snrpf and snrpg that assemble in a heptameric protein ring on the Sm site of the small nuclear RNA to form the core snRNP, and at least three U1 snRNP-specific proteins snrnp70/U1-70K, snrpa/U1-A and snrpc/U1-C.

It localises to the nucleus. In terms of biological role, component of the spliceosomal U1 snRNP, which is essential for recognition of the pre-mRNA 5' splice-site and the subsequent assembly of the spliceosome. U1 snRNP is the first snRNP to interact with pre-mRNA. This interaction is required for the subsequent binding of U2 snRNP and the U4/U6/U5 tri-snRNP. Snrpa binds stem loop II of U1 snRNA. The chain is U1 small nuclear ribonucleoprotein A (snrpa) from Xenopus laevis (African clawed frog).